The sequence spans 440 residues: Gamma-aminobutyric acid receptor subunit pi (440 aa).

The signal sequence occupies residues 1 to 23; sequence MSYSLYLAFLCLSLLTQRTCIQG. Residues 24-241 lie on the Extracellular side of the membrane; it reads NQVNVEVSRS…LVLQFELRRN (218 aa). N-linked (GlcNAc...) asparagine glycans are attached at residues asparagine 43, asparagine 102, and asparagine 145. Cysteine 160 and cysteine 174 form a disulfide bridge. Asparagine 196 and asparagine 228 each carry an N-linked (GlcNAc...) asparagine glycan. The chain crosses the membrane as a helical span at residues 242 to 262; sequence VLYFILETYVPSTFLVVLSWV. Residues 263–270 are Cytoplasmic-facing; sequence SFWISLDS. A helical transmembrane segment spans residues 271–290; that stretch reads VPARTCIGVTTVLSMTTLMI. The Extracellular portion of the chain corresponds to 291 to 301; sequence GSRTSLPNTNC. The helical transmembrane segment at 302–322 threads the bilayer; the sequence is FIKAIDVYLGICFSFVFGALL. Over 323–419 the chain is Cytoplasmic; sequence EYAVAHYSSL…NPSNVDRYSK (97 aa). Residues 420–440 form a helical membrane-spanning segment; it reads LLFPLIFMLANVFYWAYYMYF.

It belongs to the ligand-gated ion channel (TC 1.A.9) family. Gamma-aminobutyric acid receptor (TC 1.A.9.5) subfamily. GABRP sub-subfamily. Heteropentamer, formed by a combination of alpha (GABRA1-6), beta (GABRB1-3), gamma (GABRG1-3), delta (GABRD), epsilon (GABRE), rho (GABRR1-3), pi (GABRP) and theta (GABRQ) chains, each subunit exhibiting distinct physiological and pharmacological properties.

The protein localises to the cell membrane. Its subcellular location is the apical cell membrane. The enzyme catalyses chloride(in) = chloride(out). Pi subunit of the heteropentameric ligand-gated chloride channel gated by gamma-aminobutyric acid (GABA). GABA-gated chloride channels, also named GABA(A) receptors (GABAAR), consist of five subunits arranged around a central pore and contain GABA active binding site(s) located at the alpha and beta subunit interfaces. When activated by GABA, GABAARs selectively allow the flow of chloride anions across the cell membrane down their electrochemical gradient. Pi-containing GABAARs are mostly located in peripheral tissues. In the uterus, pi subunits modulate uterus contraction by altering the sensitivity of GABAARs to pregnanolone. In the lungs, pi-containing GABAARs contribute to pulmonary fluid transport via luminal secretion of chloride. The polypeptide is Gamma-aminobutyric acid receptor subunit pi (Mus musculus (Mouse)).